Here is a 610-residue protein sequence, read N- to C-terminus: Glutamine--fructose-6-phosphate aminotransferase [isomerizing] (610 aa).

Cys-2 serves as the catalytic Nucleophile; for GATase activity. A Glutamine amidotransferase type-2 domain is found at 2 to 218 (CGIVGAVAQR…EGDVAEITRR (217 aa)). SIS domains lie at 286–426 (AAEI…QQGR) and 459–600 (LATD…VDQP). Lys-605 (for Fru-6P isomerization activity) is an active-site residue.

In terms of assembly, homodimer.

It is found in the cytoplasm. The enzyme catalyses D-fructose 6-phosphate + L-glutamine = D-glucosamine 6-phosphate + L-glutamate. Catalyzes the first step in hexosamine metabolism, converting fructose-6P into glucosamine-6P using glutamine as a nitrogen source. The chain is Glutamine--fructose-6-phosphate aminotransferase [isomerizing] from Vibrio vulnificus (strain CMCP6).